The following is a 326-amino-acid chain: Beta-ketoacyl-[acyl-carrier-protein] synthase III (326 aa).

Catalysis depends on residues Cys112 and His251. Residues 252 to 256 (QANSR) are ACP-binding. The active site involves Asn281.

It belongs to the thiolase-like superfamily. FabH family. In terms of assembly, homodimer.

Its subcellular location is the cytoplasm. It carries out the reaction malonyl-[ACP] + acetyl-CoA + H(+) = 3-oxobutanoyl-[ACP] + CO2 + CoA. It functions in the pathway lipid metabolism; fatty acid biosynthesis. In terms of biological role, catalyzes the condensation reaction of fatty acid synthesis by the addition to an acyl acceptor of two carbons from malonyl-ACP. Catalyzes the first condensation reaction which initiates fatty acid synthesis and may therefore play a role in governing the total rate of fatty acid production. Possesses both acetoacetyl-ACP synthase and acetyl transacylase activities. Its substrate specificity determines the biosynthesis of branched-chain and/or straight-chain of fatty acids. In Clostridium botulinum (strain Langeland / NCTC 10281 / Type F), this protein is Beta-ketoacyl-[acyl-carrier-protein] synthase III.